The chain runs to 387 residues: 3-ketoacyl-CoA thiolase (387 aa).

Cys91 (acyl-thioester intermediate) is an active-site residue. Residues His343 and Cys373 each act as proton acceptor in the active site.

The protein belongs to the thiolase-like superfamily. Thiolase family. In terms of assembly, heterotetramer of two alpha chains (FadB) and two beta chains (FadA).

The protein resides in the cytoplasm. It carries out the reaction an acyl-CoA + acetyl-CoA = a 3-oxoacyl-CoA + CoA. It functions in the pathway lipid metabolism; fatty acid beta-oxidation. Functionally, catalyzes the final step of fatty acid oxidation in which acetyl-CoA is released and the CoA ester of a fatty acid two carbons shorter is formed. In Enterobacter sp. (strain 638), this protein is 3-ketoacyl-CoA thiolase.